Reading from the N-terminus, the 263-residue chain is MNYLNKIRIENPLTICYTNDVVKNFTANGLLSIGASPAMSEAPEEAEEFYKVAQALLINIGTLTAQNEQDIIAIAQTANEAGLPIVFDPVAVGASTYRKQFCKLLLKSAKVSVIKGNASEILALIDDTATMKGTDSDAYLDAVAIAKKAYAIYKTAIVITGKEDVIVQGDKAIVLANGSPLLARVTGAGCLLGGIIAGFLFRETEPDIEALIEAVSVFNIAAEVAAENENCGGPGTFSPLLLDTLYHLNETTYQQRICIQEVE.

Methionine 39 is a substrate binding site. Residues lysine 115 and threonine 160 each contribute to the ATP site. A substrate-binding site is contributed by glycine 187.

It belongs to the Thz kinase family. Mg(2+) serves as cofactor.

The enzyme catalyses 5-(2-hydroxyethyl)-4-methylthiazole + ATP = 4-methyl-5-(2-phosphooxyethyl)-thiazole + ADP + H(+). It functions in the pathway cofactor biosynthesis; thiamine diphosphate biosynthesis; 4-methyl-5-(2-phosphoethyl)-thiazole from 5-(2-hydroxyethyl)-4-methylthiazole: step 1/1. Catalyzes the phosphorylation of the hydroxyl group of 4-methyl-5-beta-hydroxyethylthiazole (THZ). This Staphylococcus aureus (strain bovine RF122 / ET3-1) protein is Hydroxyethylthiazole kinase.